The primary structure comprises 103 residues: Flagellar hook-basal body complex protein FliE (103 aa).

This sequence belongs to the FliE family.

It is found in the bacterial flagellum basal body. This is Flagellar hook-basal body complex protein FliE from Helicobacter hepaticus (strain ATCC 51449 / 3B1).